Consider the following 2298-residue polypeptide: Protein Ycf2 (2298 aa).

1637–1644 (GSIGTGRS) serves as a coordination point for ATP.

This sequence belongs to the Ycf2 family.

The protein localises to the plastid. It is found in the chloroplast stroma. Functionally, probable ATPase of unknown function. Its presence in a non-photosynthetic plant (Epifagus virginiana) and experiments in tobacco indicate that it has an essential function which is probably not related to photosynthesis. This is Protein Ycf2 from Lotus japonicus (Lotus corniculatus var. japonicus).